The chain runs to 212 residues: Glycerol-3-phosphate acyltransferase (212 aa).

Helical transmembrane passes span 3–23 (ILLAALVAYLIGSVSFAVVVS), 78–98 (DVAVACVAIAVFLGHLYPVFF), 115–135 (AVHPVLGLATALTWLIVAFFF), and 155–177 (FLFGTSHNPVAWAVLAMSVLLVW).

This sequence belongs to the PlsY family. Probably interacts with PlsX.

The protein localises to the cell inner membrane. It catalyses the reaction an acyl phosphate + sn-glycerol 3-phosphate = a 1-acyl-sn-glycero-3-phosphate + phosphate. It functions in the pathway lipid metabolism; phospholipid metabolism. Functionally, catalyzes the transfer of an acyl group from acyl-phosphate (acyl-PO(4)) to glycerol-3-phosphate (G3P) to form lysophosphatidic acid (LPA). This enzyme utilizes acyl-phosphate as fatty acyl donor, but not acyl-CoA or acyl-ACP. The chain is Glycerol-3-phosphate acyltransferase from Burkholderia ambifaria (strain ATCC BAA-244 / DSM 16087 / CCUG 44356 / LMG 19182 / AMMD) (Burkholderia cepacia (strain AMMD)).